The chain runs to 391 residues: S-adenosylmethionine synthase (391 aa).

Positions 1–20 (MPRSDYLFTSESVSEGHPDK) are disordered. Residue His-17 coordinates ATP. A Mg(2+)-binding site is contributed by Asp-19. Glu-45 contacts K(+). Residues Glu-58 and Gln-102 each coordinate L-methionine. Residues 102–112 (QSADIAQGVDA) are flexible loop. ATP contacts are provided by residues 169-171 (DAK), 235-236 (KF), Asp-244, 250-251 (RK), Ala-267, and Lys-271. Asp-244 is an L-methionine binding site. Lys-275 serves as a coordination point for L-methionine.

The protein belongs to the AdoMet synthase family. Homotetramer; dimer of dimers. Mg(2+) is required as a cofactor. Requires K(+) as cofactor.

It is found in the cytoplasm. The catalysed reaction is L-methionine + ATP + H2O = S-adenosyl-L-methionine + phosphate + diphosphate. It participates in amino-acid biosynthesis; S-adenosyl-L-methionine biosynthesis; S-adenosyl-L-methionine from L-methionine: step 1/1. Its function is as follows. Catalyzes the formation of S-adenosylmethionine (AdoMet) from methionine and ATP. The overall synthetic reaction is composed of two sequential steps, AdoMet formation and the subsequent tripolyphosphate hydrolysis which occurs prior to release of AdoMet from the enzyme. The sequence is that of S-adenosylmethionine synthase from Methylorubrum extorquens (strain CM4 / NCIMB 13688) (Methylobacterium extorquens).